Reading from the N-terminus, the 131-residue chain is MLIGVGTDIVQIPRIEKILHLYPELFAKKILTSKELKQFALLGKINHAAFLAKRFAAKEAVSKAFGVGIGQGINFKDITILNNDLGKPIVEVSSNYTNTLSPFNIHLSLADDYPVCVAFAVIESSYNVILG.

Mg(2+)-binding residues include Asp8 and Glu59.

Belongs to the P-Pant transferase superfamily. AcpS family. The cofactor is Mg(2+).

The protein resides in the cytoplasm. It carries out the reaction apo-[ACP] + CoA = holo-[ACP] + adenosine 3',5'-bisphosphate + H(+). Functionally, transfers the 4'-phosphopantetheine moiety from coenzyme A to a Ser of acyl-carrier-protein. The sequence is that of Holo-[acyl-carrier-protein] synthase from Rickettsia conorii (strain ATCC VR-613 / Malish 7).